Here is a 121-residue protein sequence, read N- to C-terminus: MSISQDDILNAVAEMSVIQVVELIKAFEEKFGVTAAAGSAGPAAAAAVVEEQTEFNVMLLEAGEKKVNVIKAVRELTGLGLKEAKAVVDGAPGIVLEAVAKDAADKAKATLEEAGAKVELK.

Belongs to the bacterial ribosomal protein bL12 family. Homodimer. Part of the ribosomal stalk of the 50S ribosomal subunit. Forms a multimeric L10(L12)X complex, where L10 forms an elongated spine to which 2 to 4 L12 dimers bind in a sequential fashion. Binds GTP-bound translation factors.

Functionally, forms part of the ribosomal stalk which helps the ribosome interact with GTP-bound translation factors. Is thus essential for accurate translation. This is Large ribosomal subunit protein bL12 from Pseudomonas syringae pv. tomato (strain ATCC BAA-871 / DC3000).